Here is a 274-residue protein sequence, read N- to C-terminus: MSVNDNINHNKKLLEKYVIEDDLYNFTQLINEVSCDDEFGYKLTTIATQEASINIIKYVFDTDIIKCFPKHQMLRYAVGLPSLGYFTKNKDEFHNSLELMKLLLQYDMNNNDFPISEYLYNAVKQNNFEKVKLLIDNGINSLKIISRYHFENKYIYNNHEIVKYMIDNGVDIQGFNLSYALHSCIISDNNDGVEYYFNIGANINDLDLESVVTIIKYNRIQKLFDYSYNFNKLDYLLDNEENNNYDEALNMLVELTSIKTKNVCVLLSLIMSKY.

4 ANK repeats span residues 78–112 (VGLPSLGYFTKNKDEFHNSLELMKLLLQYDMNNND), 114–144 (PISEYLYNAVKQNNFEKVKLLIDNGINSLKI), 146–174 (SRYHFENKYIYNNHEIVKYMIDNGVDIQG), and 176–205 (NLSYALHSCIISDNNDGVEYYFNIGANIND).

This is Putative ankyrin repeat protein R597 from Acanthamoeba polyphaga mimivirus (APMV).